Reading from the N-terminus, the 250-residue chain is Flavin-dependent thymidylate synthase (250 aa).

One can recognise a ThyX domain in the interval 7–233 (LRVQLIAKTD…PSIFGDFDIA (227 aa)). FAD-binding positions include Ser-71, 95-97 (RHR), and Gln-103. Residues 92-95 (ELIR), 103-107 (QLSQR), and Arg-172 contribute to the dUMP site. The ThyX motif motif lies at 95 to 105 (RHRHFSYSQLS). Residues 188-190 (NYR) and His-194 contribute to the FAD site. Arg-199 provides a ligand contact to dUMP. Arg-199 acts as the Involved in ionization of N3 of dUMP, leading to its activation in catalysis.

Belongs to the thymidylate synthase ThyX family. As to quaternary structure, homotetramer. It depends on FAD as a cofactor.

The catalysed reaction is dUMP + (6R)-5,10-methylene-5,6,7,8-tetrahydrofolate + NADPH + H(+) = dTMP + (6S)-5,6,7,8-tetrahydrofolate + NADP(+). It participates in pyrimidine metabolism; dTTP biosynthesis. Catalyzes the reductive methylation of 2'-deoxyuridine-5'-monophosphate (dUMP) to 2'-deoxythymidine-5'-monophosphate (dTMP) while utilizing 5,10-methylenetetrahydrofolate (mTHF) as the methyl donor, and NADPH and FADH(2) as the reductant. The chain is Flavin-dependent thymidylate synthase from Mycobacteroides abscessus (strain ATCC 19977 / DSM 44196 / CCUG 20993 / CIP 104536 / JCM 13569 / NCTC 13031 / TMC 1543 / L948) (Mycobacterium abscessus).